We begin with the raw amino-acid sequence, 77 residues long: Conotoxin Lt7.1 (77 aa).

The first 19 residues, Met-1–Gly-19, serve as a signal peptide directing secretion. A propeptide spanning residues Leu-20–Gly-49 is cleaved from the precursor. Disulfide bonds link Cys-51-Cys-65, Cys-58-Cys-69, and Cys-64-Cys-74.

Belongs to the conotoxin O2 superfamily. As to expression, expressed by the venom duct.

Its subcellular location is the secreted. In Conus litteratus (Lettered cone), this protein is Conotoxin Lt7.1.